Here is a 642-residue protein sequence, read N- to C-terminus: Transcription factor 4 (642 aa).

A compositionally biased stretch (polar residues) spans methionine 1–asparagine 25. Residues methionine 1–arginine 59 are essential for MYOD1 inhibition. 4 disordered regions span residues methionine 1–glycine 296, histidine 311–leucine 354, proline 444–asparagine 545, and lysine 609–methionine 642. Residues serine 42, serine 63, and serine 68 each carry the phosphoserine modification. Polar residues-rich tracts occupy residues glycine 83–histidine 98, glycine 112–asparagine 130, proline 181–phenylalanine 191, glycine 218–cysteine 230, and proline 241–isoleucine 281. Positions threonine 312–proline 323 are enriched in low complexity. A compositionally biased stretch (polar residues) spans asparagine 340–asparagine 349. Serine 347 bears the Phosphoserine mark. Positions leucine 354–leucine 375 are leucine-zipper. Composition is skewed to low complexity over residues proline 444–glutamine 455 and glycine 478–glutamate 487. Serine 490 carries the post-translational modification Phosphoserine. 2 stretches are compositionally biased toward basic and acidic residues: residues lysine 502–lysine 517 and proline 530–asparagine 545. The bHLH domain maps to glutamate 539–leucine 592. Residues glutamine 594 to serine 617 form a class A specific domain region.

In terms of assembly, efficient DNA binding requires dimerization with another bHLH protein. Forms homo- or heterooligomers with myogenin. Interacts with HIVEP2. Interacts with NEUROD2. Interacts with AGBL1. As to expression, widely expressed.

Its subcellular location is the nucleus. In terms of biological role, transcription factor that binds to the immunoglobulin enhancer Mu-E5/KE5-motif. Involved in the initiation of neuronal differentiation. Activates transcription by binding to the E box (5'-CANNTG-3'). Binds to the thyroglobulin promoter. The sequence is that of Transcription factor 4 (TCF4) from Canis lupus familiaris (Dog).